A 351-amino-acid chain; its full sequence is N-formyl peptide receptor 2 (351 aa).

The Extracellular segment spans residues 1-27 (METNFSTPLNEYEEVSYESAGYTVLRI). An N-linked (GlcNAc...) asparagine glycan is attached at Asn-4. The helical transmembrane segment at 28–50 (LPLVVLGVTFVLGVLGNGLVIWV) threads the bilayer. The Cytoplasmic segment spans residues 51 to 61 (AGFRMTRTVTT). Residues 62–83 (ICYLNLALADFSFTATLPFLIV) form a helical membrane-spanning segment. Topologically, residues 84–100 (SMAMGEKWPFGWFLCKL) are extracellular. Residues Cys-98 and Cys-176 are joined by a disulfide bond. The chain crosses the membrane as a helical span at residues 101 to 121 (IHIVVDINLFGSVFLIGFIAL). Over 122–140 (DRCICVLHPVWAQNHRTVS) the chain is Cytoplasmic. Residues 141–162 (LAMKVIVGPWILALVLTLPVFL) form a helical membrane-spanning segment. At 163–205 (FLTTVTIPNGDTYCTFNFASWGGTPEERLKVAITMLTARGIIR) the chain is on the extracellular side. A helical transmembrane segment spans residues 206–226 (FVIGFSLPMSIVAICYGLIAA). Over 227-242 (KIHKKGMIKSSRPLRV) the chain is Cytoplasmic. The helical transmembrane segment at 243-266 (LTAVVASFFICWFPFQLVALLGTV) threads the bilayer. Topologically, residues 267–286 (WLKEMLFYGKYKIIDILVNP) are extracellular. The chain crosses the membrane as a helical span at residues 287–306 (TSSLAFFNSCLNPMLYVFVG). Residues 307–351 (QDFRERLIHSLPTSLERALSEDSAPTNDTAANSASPPAETELQAM) are Cytoplasmic-facing. The segment at 325 to 351 (LSEDSAPTNDTAANSASPPAETELQAM) is disordered. Residues 329–341 (SAPTNDTAANSAS) are compositionally biased toward polar residues.

This sequence belongs to the G-protein coupled receptor 1 family. Interacts with Amyloid-beta protein 42, product of APP; the interaction takes place at the cell surface and the complex is then rapidly internalized. As to quaternary structure, (Microbial infection) Interacts with Staphylococcus aureus protein SSL13; this interaction leads to the activation of neutrophils. Detected in lung, bone marrow, neutrophils, spleen and testis.

The protein resides in the cell membrane. Functionally, low affinity receptor for N-formyl-methionyl peptides, which are powerful neutrophil chemotactic factors. Binding of FMLP to the receptor causes activation of neutrophils. This response is mediated via a G-protein that activates a phosphatidylinositol-calcium second messenger system. The activation of LXA4R could result in an anti-inflammatory outcome counteracting the actions of pro-inflammatory signals such as LTB4 (leukotriene B4). Receptor for the chemokine-like protein FAM19A5, mediating FAM19A5-stimulated macrophage chemotaxis and the inhibitory effect on TNFSF11/RANKL-induced osteoclast differentiation. Acts as a receptor for humanin. In Homo sapiens (Human), this protein is N-formyl peptide receptor 2 (FPR2).